The chain runs to 793 residues: Kinesin-like protein KIF3C (793 aa).

A Kinesin motor domain is found at 10–365; that stretch reads ALKVVARCRP…LRFANRAKNI (356 aa). Residue 97–104 participates in ATP binding; the sequence is GQTGTGKT. Disordered regions lie at residues 251–288, 395–423, and 756–793; these read ERQN…ERPK, EKRG…GYPE, and KVRK…ADHE. The segment covering 270–284 has biased composition (gly residues); sequence GGSGGGGGSGGGAGG. A coiled-coil region spans residues 376-630; it reads KDTLLREFQE…QNEQTRELKL (255 aa). Positions 399-413 are enriched in basic residues; that stretch reads MLGKRPRRKSSRGKK. The interval 631-793 is globular; sequence KYLIIENFIP…LRPATVADHE (163 aa).

The protein belongs to the TRAFAC class myosin-kinesin ATPase superfamily. Kinesin family. Kinesin II subfamily. As to quaternary structure, heterodimer of KIF3A and KIF3C.

The protein resides in the cytoplasm. Its subcellular location is the cytoskeleton. Functionally, microtubule-based anterograde translocator for membranous organelles. The chain is Kinesin-like protein KIF3C (KIF3C) from Pongo abelii (Sumatran orangutan).